A 100-amino-acid polypeptide reads, in one-letter code: MYB-like transcription factor TCL2 (100 aa).

Residues 37–74 form the Myb-like domain; that stretch reads TEQEEDLIFRMHRLVGDRWDLIAGRVVGREAKDIERYW.

Interacts with GL3. Expressed in cotyledons, petioles, rosette leaves, hydathodes, cauline leaves, stems, pedicels and flower buds.

The protein localises to the nucleus. Functionally, MYB-type transcription factor involved in trichome cell specification. Acts as a negative regulator of trichome patterning and formation. May function by suppressing the expression of GL3. This is MYB-like transcription factor TCL2 (TCL2) from Arabidopsis thaliana (Mouse-ear cress).